The following is a 544-amino-acid chain: Membrane protein insertase YidC (544 aa).

Residues 4-24 traverse the membrane as a helical segment; sequence KALLALVLSAAVLLIYQIFIY. A disordered region spans residues 44 to 78; sequence NPAAPVSPQTPADEPSSGSAANPETAAALPVDGTE. 3 consecutive transmembrane segments (helical) span residues 363 to 383, 434 to 454, and 508 to 528; these read NYGI…WPLG, LPMI…LYAI, and PVIF…YWLF.

The protein belongs to the OXA1/ALB3/YidC family. Type 1 subfamily. As to quaternary structure, interacts with the Sec translocase complex via SecD. Specifically interacts with transmembrane segments of nascent integral membrane proteins during membrane integration.

The protein localises to the cell inner membrane. Its function is as follows. Required for the insertion and/or proper folding and/or complex formation of integral membrane proteins into the membrane. Involved in integration of membrane proteins that insert both dependently and independently of the Sec translocase complex, as well as at least some lipoproteins. Aids folding of multispanning membrane proteins. This Syntrophus aciditrophicus (strain SB) protein is Membrane protein insertase YidC.